We begin with the raw amino-acid sequence, 1108 residues long: Retinal guanylyl cyclase 2 (1108 aa).

Residues 1-50 form the signal peptide; that stretch reads MFLGLGRFSRLVLWFAAFRKLLGHHGLASAKFLWCLCLLSVMSLPQQVWT. Residues 51-467 are Extracellular-facing; the sequence is LPYKIGVVGP…KICHGGIDPA (417 aa). A disulfide bridge connects residues cysteine 104 and cysteine 132. A helical membrane pass occupies residues 468-490; it reads FAMMVCLTLLIALLSINGFAYFI. The Cytoplasmic segment spans residues 491 to 1108; it reads RRRINKIQLI…AERQLVRNKP (618 aa). Residues 532-812 form the Protein kinase domain; sequence FQITSEVQSG…DEIFNQFKTF (281 aa). Residues 884–1014 form the Guanylate cyclase domain; that stretch reads TLYFSDIVGF…DTVNTASRME (131 aa).

This sequence belongs to the adenylyl cyclase class-4/guanylyl cyclase family. In terms of assembly, homodimer. Interacts with RD3; promotes the exit of GUCY2F from the endoplasmic reticulum and its trafficking to the photoreceptor outer segments. In terms of processing, there are 9 conserved cysteine residues in sensory guanylate cyclases, 6 in the extracellular domain, which may be involved in intra- or interchain disulfide bonds. In terms of tissue distribution, retina. Localized exclusively in the outer nuclear layer and inner segments of the rod and cone photoreceptor cells.

Its subcellular location is the photoreceptor outer segment membrane. The catalysed reaction is GTP = 3',5'-cyclic GMP + diphosphate. Activated by GUCA1B when free calcium ions concentration is low, and inhibited by GUCA1B when free calcium ions concentration is high. Inhibited by RD3. In terms of biological role, responsible for the synthesis of cyclic GMP (cGMP) in rods and cones of photoreceptors. Plays an essential role in phototransduction, by mediating cGMP replenishment. May also participate in the trafficking of membrane-asociated proteins to the photoreceptor outer segment membrane. The sequence is that of Retinal guanylyl cyclase 2 (GUCY2F) from Homo sapiens (Human).